We begin with the raw amino-acid sequence, 464 residues long: tRNA modification GTPase MnmE (464 aa).

The (6S)-5-formyl-5,6,7,8-tetrahydrofolate site is built by Arg-25, Glu-87, and Lys-130. Residues 226 to 386 (GLSVVLAGQP…LRAELLRIAG (161 aa)) form the TrmE-type G domain. K(+) is bound at residue Asn-236. GTP-binding positions include 236–241 (NVGKSS), 255–261 (TPIAGTT), and 280–283 (DTAG). Residue Ser-240 coordinates Mg(2+). K(+) contacts are provided by Thr-255, Ile-257, and Thr-260. Residue Thr-261 coordinates Mg(2+). Lys-464 lines the (6S)-5-formyl-5,6,7,8-tetrahydrofolate pocket.

Belongs to the TRAFAC class TrmE-Era-EngA-EngB-Septin-like GTPase superfamily. TrmE GTPase family. As to quaternary structure, homodimer. Heterotetramer of two MnmE and two MnmG subunits. Requires K(+) as cofactor.

The protein resides in the cytoplasm. Exhibits a very high intrinsic GTPase hydrolysis rate. Involved in the addition of a carboxymethylaminomethyl (cmnm) group at the wobble position (U34) of certain tRNAs, forming tRNA-cmnm(5)s(2)U34. The sequence is that of tRNA modification GTPase MnmE from Burkholderia orbicola (strain AU 1054).